Here is a 456-residue protein sequence, read N- to C-terminus: Bifunctional protein GlmU (456 aa).

Residues 1 to 229 (MYKCALILAA…FEEILGVNSR (229 aa)) form a pyrophosphorylase region. UDP-N-acetyl-alpha-D-glucosamine contacts are provided by residues 8–11 (LAAG), lysine 22, glutamine 73, and 78–79 (GT). Aspartate 103 contacts Mg(2+). 4 residues coordinate UDP-N-acetyl-alpha-D-glucosamine: glycine 140, glutamate 155, asparagine 170, and asparagine 227. Residue asparagine 227 coordinates Mg(2+). The tract at residues 230-250 (LQLCQVGKVMQKRINEKHMEN) is linker. The segment at 251 to 456 (GSTLIDPDNT…GWVDKKGLLK (206 aa)) is N-acetyltransferase. UDP-N-acetyl-alpha-D-glucosamine is bound by residues arginine 332 and lysine 350. The Proton acceptor role is filled by histidine 362. Tyrosine 365 and asparagine 376 together coordinate UDP-N-acetyl-alpha-D-glucosamine. Residues 385–386 (NY), alanine 422, and arginine 439 contribute to the acetyl-CoA site.

It in the N-terminal section; belongs to the N-acetylglucosamine-1-phosphate uridyltransferase family. The protein in the C-terminal section; belongs to the transferase hexapeptide repeat family. In terms of assembly, homotrimer. Requires Mg(2+) as cofactor.

The protein resides in the cytoplasm. It carries out the reaction alpha-D-glucosamine 1-phosphate + acetyl-CoA = N-acetyl-alpha-D-glucosamine 1-phosphate + CoA + H(+). The enzyme catalyses N-acetyl-alpha-D-glucosamine 1-phosphate + UTP + H(+) = UDP-N-acetyl-alpha-D-glucosamine + diphosphate. It participates in nucleotide-sugar biosynthesis; UDP-N-acetyl-alpha-D-glucosamine biosynthesis; N-acetyl-alpha-D-glucosamine 1-phosphate from alpha-D-glucosamine 6-phosphate (route II): step 2/2. Its pathway is nucleotide-sugar biosynthesis; UDP-N-acetyl-alpha-D-glucosamine biosynthesis; UDP-N-acetyl-alpha-D-glucosamine from N-acetyl-alpha-D-glucosamine 1-phosphate: step 1/1. It functions in the pathway bacterial outer membrane biogenesis; LPS lipid A biosynthesis. In terms of biological role, catalyzes the last two sequential reactions in the de novo biosynthetic pathway for UDP-N-acetylglucosamine (UDP-GlcNAc). The C-terminal domain catalyzes the transfer of acetyl group from acetyl coenzyme A to glucosamine-1-phosphate (GlcN-1-P) to produce N-acetylglucosamine-1-phosphate (GlcNAc-1-P), which is converted into UDP-GlcNAc by the transfer of uridine 5-monophosphate (from uridine 5-triphosphate), a reaction catalyzed by the N-terminal domain. The sequence is that of Bifunctional protein GlmU from Clostridium acetobutylicum (strain ATCC 824 / DSM 792 / JCM 1419 / IAM 19013 / LMG 5710 / NBRC 13948 / NRRL B-527 / VKM B-1787 / 2291 / W).